A 624-amino-acid chain; its full sequence is (-)-beta-phellandrene synthase 2, chloroplastic (624 aa).

The N-terminal 48 residues, 1–48 (MAIVSSVPLASKSCLHKSLISSIHKLKPFCRTIPTLGMSRPGKYVMPS), are a transit peptide targeting the chloroplast. Positions 375, 379, and 527 each coordinate Mg(2+). The short motif at 375–379 (DDMYD) is the DDXXD motif element.

The protein belongs to the terpene synthase family. Tpsd subfamily. Mg(2+) is required as a cofactor. The cofactor is Mn(2+).

It is found in the plastid. It localises to the chloroplast. It catalyses the reaction (2E)-geranyl diphosphate = (-)-beta-phellandrene + diphosphate. The protein operates within terpene metabolism; oleoresin biosynthesis. Its function is as follows. Terpene synthase (TPS) involved in the biosynthesis of monoterpene natural products included in conifer oleoresin secretions and volatile emissions; these compounds contribute to biotic and abiotic stress defense against herbivores and pathogens. Catalyzes the conversion of (2E)-geranyl diphosphate (GPP) to (-)-beta-phellandrene. The sequence is that of (-)-beta-phellandrene synthase 2, chloroplastic from Picea sitchensis (Sitka spruce).